The chain runs to 73 residues: Small ribosomal subunit protein bS18B (73 aa).

Belongs to the bacterial ribosomal protein bS18 family. Part of the 30S ribosomal subunit. Forms a tight heterodimer with protein bS6.

Its function is as follows. Binds as a heterodimer with protein bS6 to the central domain of the 16S rRNA, where it helps stabilize the platform of the 30S subunit. In Frankia alni (strain DSM 45986 / CECT 9034 / ACN14a), this protein is Small ribosomal subunit protein bS18B.